The chain runs to 282 residues: NADPH-dependent 7-cyano-7-deazaguanine reductase (282 aa).

88-90 (IES) lines the substrate pocket. Position 90–91 (90–91 (SK)) interacts with NADPH. Cysteine 190 acts as the Thioimide intermediate in catalysis. Aspartate 197 serves as the catalytic Proton donor. 229-230 (HE) is a substrate binding site. 258 to 259 (RG) is a binding site for NADPH.

This sequence belongs to the GTP cyclohydrolase I family. QueF type 2 subfamily. As to quaternary structure, homodimer.

Its subcellular location is the cytoplasm. The enzyme catalyses 7-aminomethyl-7-carbaguanine + 2 NADP(+) = 7-cyano-7-deazaguanine + 2 NADPH + 3 H(+). Its pathway is tRNA modification; tRNA-queuosine biosynthesis. In terms of biological role, catalyzes the NADPH-dependent reduction of 7-cyano-7-deazaguanine (preQ0) to 7-aminomethyl-7-deazaguanine (preQ1). This is NADPH-dependent 7-cyano-7-deazaguanine reductase from Shigella dysenteriae serotype 1 (strain Sd197).